The primary structure comprises 453 residues: DDB1- and CUL4-associated factor 12 (453 aa).

A compositionally biased stretch (basic residues) spans 1-12 (MARKVVSRKRKA). The disordered stretch occupies residues 1–34 (MARKVVSRKRKAPASPGAGSDAQGPQFGWDHSLH). The tract at residues 1-38 (MARKVVSRKRKAPASPGAGSDAQGPQFGWDHSLHKRKR) is required for nuclear location and interaction with MOV10. A Phosphoserine modification is found at Ser-15. WD repeat units follow at residues 81-122 (EREF…TSQI), 123-175 (TKIP…TLDP), 176-242 (VCVG…ALKD), 243-286 (IPKE…NTLS), 287-331 (KLLS…SYNV), and 332-366 (KSVC…LFYD).

This sequence belongs to the WD repeat DCAF12 family. In terms of assembly, component of the DCX(DCAF12) E3 ubiquitin ligase complex, at least composed of CUL4 (CUL4A or CUL4B), DDB1, DCAF12 and RBX1. In terms of tissue distribution, highly expressed in lung cancer tissues and some cancer cell lines. Restricted expression in normal testis.

It localises to the cytoplasm. Its subcellular location is the cytoskeleton. The protein resides in the microtubule organizing center. The protein localises to the centrosome. It is found in the nucleus. The protein operates within protein modification; protein ubiquitination. Substrate-recognition component of a DCX (DDB1-CUL4-X-box) E3 ubiquitin-protein ligase complex of the DesCEND (destruction via C-end degrons) pathway, which recognizes a C-degron located at the extreme C terminus of target proteins, leading to their ubiquitination and degradation. The C-degron recognized by the DesCEND pathway is usually a motif of less than ten residues and can be present in full-length proteins, truncated proteins or proteolytically cleaved forms. The DCX(DCAF12) complex specifically recognizes proteins with a diglutamate (Glu-Glu) at the C-terminus, such as MAGEA3, MAGEA6 and CCT5, leading to their ubiquitination and degradation. Ubiquitination of MAGEA3, MAGEA6 by DCX(DCAF12) complex is required for starvation-induced autophagy. Also directly recognizes the C-terminal glutamate-leucine (Glu-Leu) degron as an alternative degron in proteins such as MOV10, leading to their ubiquitination and degradation. Controls the protein level of MOV10 during spermatogenesis and in T cells, especially after their activation. The chain is DDB1- and CUL4-associated factor 12 from Homo sapiens (Human).